Reading from the N-terminus, the 269-residue chain is tRNA pseudouridine synthase A (269 aa).

The Nucleophile role is filled by Asp51. Tyr109 lines the substrate pocket.

It belongs to the tRNA pseudouridine synthase TruA family. In terms of assembly, homodimer.

The enzyme catalyses uridine(38/39/40) in tRNA = pseudouridine(38/39/40) in tRNA. Formation of pseudouridine at positions 38, 39 and 40 in the anticodon stem and loop of transfer RNAs. The protein is tRNA pseudouridine synthase A of Haemophilus influenzae (strain PittGG).